Here is a 426-residue protein sequence, read N- to C-terminus: NADH-quinone oxidoreductase subunit H 1 (426 aa).

Helical transmembrane passes span L22–M42, F91–I111, I124–G144, M163–L183, F206–V226, L258–W278, F299–V319, A331–P351, V357–Y377, and I392–G412.

Belongs to the complex I subunit 1 family. In terms of assembly, NDH-1 is composed of 14 different subunits. Subunits NuoA, H, J, K, L, M, N constitute the membrane sector of the complex.

The protein localises to the cell inner membrane. The catalysed reaction is a quinone + NADH + 5 H(+)(in) = a quinol + NAD(+) + 4 H(+)(out). Its function is as follows. NDH-1 shuttles electrons from NADH, via FMN and iron-sulfur (Fe-S) centers, to quinones in the respiratory chain. The immediate electron acceptor for the enzyme in this species is believed to be ubiquinone. Couples the redox reaction to proton translocation (for every two electrons transferred, four hydrogen ions are translocated across the cytoplasmic membrane), and thus conserves the redox energy in a proton gradient. This subunit may bind ubiquinone. This Koribacter versatilis (strain Ellin345) protein is NADH-quinone oxidoreductase subunit H 1.